The primary structure comprises 174 residues: NADH-quinone oxidoreductase subunit B 1 (174 aa).

Residues cysteine 53, cysteine 54, cysteine 118, and cysteine 148 each coordinate [4Fe-4S] cluster.

This sequence belongs to the complex I 20 kDa subunit family. In terms of assembly, NDH-1 is composed of 14 different subunits. Subunits NuoB, C, D, E, F, and G constitute the peripheral sector of the complex. [4Fe-4S] cluster is required as a cofactor.

Its subcellular location is the cell inner membrane. It carries out the reaction a quinone + NADH + 5 H(+)(in) = a quinol + NAD(+) + 4 H(+)(out). NDH-1 shuttles electrons from NADH, via FMN and iron-sulfur (Fe-S) centers, to quinones in the respiratory chain. The immediate electron acceptor for the enzyme in this species is believed to be ubiquinone. Couples the redox reaction to proton translocation (for every two electrons transferred, four hydrogen ions are translocated across the cytoplasmic membrane), and thus conserves the redox energy in a proton gradient. This chain is NADH-quinone oxidoreductase subunit B 1, found in Cereibacter sphaeroides (strain KD131 / KCTC 12085) (Rhodobacter sphaeroides).